A 2207-amino-acid chain; its full sequence is Mediator of RNA polymerase II transcription subunit 13-like (2207 aa).

Over residues 337–355 (VQSAASHLGSQDGGMSTMH) the composition is skewed to polar residues. Disordered stretches follow at residues 337 to 368 (VQSAASHLGSQDGGMSTMHSPKRSRKTPPKLH), 384 to 403 (AQSKRSQMSTPTREEEAAHS), 431 to 479 (VGPS…KRPL), and 519 to 574 (KYDK…VPVN). Basic residues predominate over residues 356–368 (SPKRSRKTPPKLH). Positions 384 to 394 (AQSKRSQMSTP) are enriched in polar residues. Residues 442–453 (PGFSAGLPSSSS) are compositionally biased toward low complexity. Residues 463–475 (KTTERQEKGDKLQ) show a composition bias toward basic and acidic residues. Positions 528-539 (SRNTSKQMNLNP) are enriched in polar residues. Residues 546 to 555 (PISPLPPTLS) are compositionally biased toward pro residues. Ser-548 and Ser-555 each carry phosphoserine. Positions 664–668 (LQRLL) match the LXXLL motif 1 motif. A compositionally biased stretch (basic and acidic residues) spans 731–747 (GTEKDSLKKNKSEDGFG). The segment at 731 to 767 (GTEKDSLKKNKSEDGFGTKDVTTPGHSTPVPDGKNAM) is disordered. Phosphoserine occurs at positions 812 and 821. Residues 816-847 (ELGAVSPALRSSKMPTVGTEERPPGKDGRAAG) form a disordered region. The span at 834–844 (TEERPPGKDGR) shows a compositional bias: basic and acidic residues. Ser-918 is subject to Phosphoserine. A disordered region spans residues 1004-1091 (DPDYVNTPQM…STTRPLNSVE (88 aa)). Residues 1009-1019 (NTPQMNTPVTL) are compositionally biased toward polar residues. A compositionally biased stretch (low complexity) spans 1020 to 1031 (NSAAPASNSGAG). Residues 1072 to 1087 (TDQGSPASTPSTTRPL) are compositionally biased toward polar residues. Residues 1224-1228 (LLLLL) carry the LXXLL motif 2 motif. Residues 1379–1400 (LPIPTLLVGYDKEFLTISPFSL) are leucine-zipper. Disordered regions lie at residues 1523–1652 (LMPP…SVTE) and 2042–2077 (GNLHSSPNSSPVPSPGSPSGIGVGSHFQHSRSQGER). Residues 1541–1593 (PGNAGSLPSNSGSGAPPAGSAFNPTSSSSANPTTSSSSASSGPPGSSAASAPG) show a composition bias toward low complexity. Composition is skewed to polar residues over residues 1612–1624 (QNPSAGGSSTDRT) and 1635–1649 (PGQSCTQSSQDGQDS). Ser-2080 is modified (phosphoserine).

It belongs to the Mediator complex subunit 13 family. In terms of assembly, component of the Mediator complex, which is composed of MED1, MED4, MED6, MED7, MED8, MED9, MED10, MED11, MED12, MED13, MED13L, MED14, MED15, MED16, MED17, MED18, MED19, MED20, MED21, MED22, MED23, MED24, MED25, MED26, MED27, MED29, MED30, MED31, CCNC, CDK8 and CDC2L6/CDK11. The MED12, MED13, CCNC and CDK8 subunits form a distinct module termed the CDK8 module. Mediator containing the CDK8 module is less active than Mediator lacking this module in supporting transcriptional activation. Individual preparations of the Mediator complex lacking one or more distinct subunits have been variously termed ARC, CRSP, DRIP, PC2, SMCC and TRAP. In terms of tissue distribution, highly expressed in heart and weakly expressed in brain, spleen, lung, liver, kidney and testis.

It localises to the nucleus. In terms of biological role, component of the Mediator complex, a coactivator involved in the regulated transcription of nearly all RNA polymerase II-dependent genes. Mediator functions as a bridge to convey information from gene-specific regulatory proteins to the basal RNA polymerase II transcription machinery. Mediator is recruited to promoters by direct interactions with regulatory proteins and serves as a scaffold for the assembly of a functional preinitiation complex with RNA polymerase II and the general transcription factors. This subunit may specifically regulate transcription of targets of the Wnt signaling pathway and SHH signaling pathway. This chain is Mediator of RNA polymerase II transcription subunit 13-like (Med13l), found in Mus musculus (Mouse).